We begin with the raw amino-acid sequence, 462 residues long: WD repeat-containing protein WRAP73 (462 aa).

4 WD repeats span residues 46–86 (TCLD…WHCK), 89–129 (EGSA…VSYI), 176–210 (TDTQ…YSLD), and 221–260 (EWSL…MITE). Residue S281 is modified to Phosphoserine. WD repeat units follow at residues 328–369 (NPRM…LFVV) and 371–410 (EHMS…SVQV).

Interacts with SSX2IP. As to expression, ubiquitous.

The protein resides in the cytoplasm. It localises to the cytoskeleton. It is found in the microtubule organizing center. The protein localises to the centrosome. In terms of biological role, the SSX2IP:WRAP73 complex is proposed to act as regulator of spindle anchoring at the mitotic centrosome. Required for the centrosomal localization of SSX2IP and normal mitotic bipolar spindle morphology. Required for the targeting of centriole satellite proteins to centrosomes such as of PCM1, SSX2IP, CEP290 and PIBF1/CEP90. Required for ciliogenesis and involved in the removal of the CEP97:CCP110 complex from the mother centriole. Involved in ciliary vesicle formation at the mother centriole and required for the docking of vesicles to the basal body during ciliogenesis; may promote docking of RAB8A- and ARL13B-containing vesicles. This Mus musculus (Mouse) protein is WD repeat-containing protein WRAP73 (Wrap73).